The chain runs to 327 residues: Probable cell division protein WhiA (327 aa).

Positions 275-308 form a DNA-binding region, H-T-H motif; that stretch reads SLEELGRLADPPMTKDAVAGRIRRLLSMADRKAK.

The protein belongs to the WhiA family.

In terms of biological role, involved in cell division and chromosome segregation. This Mycobacterium leprae (strain Br4923) protein is Probable cell division protein WhiA.